Consider the following 410-residue polypeptide: NADH-quinone oxidoreductase subunit H (410 aa).

The next 9 membrane-spanning stretches (helical) occupy residues 16-36, 84-104, 124-144, 165-185, 198-218, 260-280, 288-308, 320-340, and 353-373; these read LILA…LAAI, WIYL…FAVI, LPVA…GIVL, VISY…YAGT, VWFI…MVGE, VSAL…PISI, WWPL…FMWL, FMRL…AIVA, and WVTA…LLAW. Residues 384–410 are disordered; sequence SHSPPAQSSDHGAFPVPPLPVKEPADA.

The protein belongs to the complex I subunit 1 family. NDH-1 is composed of 14 different subunits. Subunits NuoA, H, J, K, L, M, N constitute the membrane sector of the complex.

It is found in the cell membrane. The enzyme catalyses a quinone + NADH + 5 H(+)(in) = a quinol + NAD(+) + 4 H(+)(out). Functionally, NDH-1 shuttles electrons from NADH, via FMN and iron-sulfur (Fe-S) centers, to quinones in the respiratory chain. The immediate electron acceptor for the enzyme in this species is believed to be menaquinone. Couples the redox reaction to proton translocation (for every two electrons transferred, four hydrogen ions are translocated across the cytoplasmic membrane), and thus conserves the redox energy in a proton gradient. This is NADH-quinone oxidoreductase subunit H from Mycolicibacterium gilvum (strain PYR-GCK) (Mycobacterium gilvum (strain PYR-GCK)).